The following is a 569-amino-acid chain: Pyrophosphate--fructose 6-phosphate 1-phosphotransferase subunit beta (569 aa).

Gly-107 lines the diphosphate pocket. Asp-201 serves as a coordination point for Mg(2+). Residues 229–231, 268–269, 276–278, Glu-337, and 442–445 each bind substrate; these read TID, KY, MGR, and YEGR. The active-site Proton acceptor is Asp-231.

Belongs to the phosphofructokinase type A (PFKA) family. PPi-dependent PFK group II subfamily. Clade 'Long' sub-subfamily. Tetramer of two alpha (regulatory) and two beta (catalytic) chains. The cofactor is Mg(2+).

The protein resides in the cytoplasm. It carries out the reaction beta-D-fructose 6-phosphate + diphosphate = beta-D-fructose 1,6-bisphosphate + phosphate + H(+). The protein operates within carbohydrate degradation; glycolysis; D-glyceraldehyde 3-phosphate and glycerone phosphate from D-glucose: step 3/4. With respect to regulation, allosterically activated by fructose 2,6-bisphosphate. Catalytic subunit of pyrophosphate--fructose 6-phosphate 1-phosphotransferase. Catalyzes the phosphorylation of D-fructose 6-phosphate, the first committing step of glycolysis. Uses inorganic phosphate (PPi) as phosphoryl donor instead of ATP like common ATP-dependent phosphofructokinases (ATP-PFKs), which renders the reaction reversible, and can thus function both in glycolysis and gluconeogenesis. The polypeptide is Pyrophosphate--fructose 6-phosphate 1-phosphotransferase subunit beta (Solanum tuberosum (Potato)).